Reading from the N-terminus, the 179-residue chain is Large ribosomal subunit protein uL5 (179 aa).

Belongs to the universal ribosomal protein uL5 family. In terms of assembly, part of the 50S ribosomal subunit; part of the 5S rRNA/L5/L18/L25 subcomplex. Contacts the 5S rRNA and the P site tRNA. Forms a bridge to the 30S subunit in the 70S ribosome.

Functionally, this is one of the proteins that bind and probably mediate the attachment of the 5S RNA into the large ribosomal subunit, where it forms part of the central protuberance. In the 70S ribosome it contacts protein S13 of the 30S subunit (bridge B1b), connecting the 2 subunits; this bridge is implicated in subunit movement. Contacts the P site tRNA; the 5S rRNA and some of its associated proteins might help stabilize positioning of ribosome-bound tRNAs. This Pseudomonas savastanoi pv. phaseolicola (strain 1448A / Race 6) (Pseudomonas syringae pv. phaseolicola (strain 1448A / Race 6)) protein is Large ribosomal subunit protein uL5.